A 378-amino-acid polypeptide reads, in one-letter code: tRNA (guanine(26)-N(2))-dimethyltransferase (378 aa).

The Trm1 methyltransferase domain maps to lysine 4–valine 374. Residues arginine 44, arginine 69, aspartate 87, aspartate 114, and alanine 115 each contribute to the S-adenosyl-L-methionine site. The Zn(2+) site is built by cysteine 246, cysteine 249, cysteine 263, and cysteine 266.

It belongs to the class I-like SAM-binding methyltransferase superfamily. Trm1 family.

It carries out the reaction guanosine(26) in tRNA + 2 S-adenosyl-L-methionine = N(2)-dimethylguanosine(26) in tRNA + 2 S-adenosyl-L-homocysteine + 2 H(+). Its function is as follows. Dimethylates a single guanine residue at position 26 of a number of tRNAs using S-adenosyl-L-methionine as donor of the methyl groups. The polypeptide is tRNA (guanine(26)-N(2))-dimethyltransferase (Saccharolobus islandicus (strain L.S.2.15 / Lassen #1) (Sulfolobus islandicus)).